We begin with the raw amino-acid sequence, 1354 residues long: Rho-associated protein kinase 1 (1354 aa).

Serine 2 is subject to N-acetylserine. In terms of domain architecture, Protein kinase spans 76–338 (YEVVKVIGRG…VEEIKRHLFF (263 aa)). Residues 82 to 90 (IGRGAFGEV) and lysine 105 contribute to the ATP site. The active-site Proton acceptor is aspartate 198. The 69-residue stretch at 341 to 409 (DQWAWETLRD…YSNRRYLSSA (69 aa)) folds into the AGC-kinase C-terminal domain. Residues 368–727 (FDDLEEDKGE…KKLKEEREAR (360 aa)) are interaction with FHOD1. A coiled-coil region spans residues 422-692 (KSLQESLQKT…RLEQEVNEHK (271 aa)). Residues 479–556 (STVSQIEKEK…LEEANDLLRT (78 aa)) form the REM-1 domain. The residue at position 647 (lysine 647) is an N6-acetyllysine. The SHROOM3 binding stretch occupies residues 707–946 (EAKSVAMCEM…TVSRLEEANS (240 aa)). Residues 949-1015 (TKDIEILRRE…LAEIMNRKDF (67 aa)) form the RhoBD domain. Positions 998–1010 (LKTQAVNKLAEIM) are RHOA binding. Positions 1011–1102 (NRKDFKIDRK…KLLDLSDSTS (92 aa)) form a coiled coil. Phosphoserine occurs at positions 1105 and 1108. The auto-inhibitory stretch occupies residues 1115–1354 (NLPESRIEGW…VVKNTSGKTS (240 aa)). The 200-residue stretch at 1118–1317 (ESRIEGWLSV…WVTHLVKKIP (200 aa)) folds into the PH domain. The segment at 1228–1281 (GHEFIPTLYHFPANCDACAKPLWHVFKPPPALECRRCHVKCHRDHLDKKEDLIC) adopts a Phorbol-ester/DAG-type zinc-finger fold. Positions 1320–1354 (PPSGFVRASPRTLSTRSTANQSFRKVVKNTSGKTS) are disordered. A Phosphoserine modification is found at serine 1328. The segment covering 1330–1354 (RTLSTRSTANQSFRKVVKNTSGKTS) has biased composition (polar residues).

This sequence belongs to the protein kinase superfamily. AGC Ser/Thr protein kinase family. Homodimer. Interacts with RHOB, RHOC, MYLC2B and PTEN. Interacts with ITGB1BP1 (via N-terminus and PTB domain). Interacts with RHOA (activated by GTP), CHORDC1, DAPK3, GEM, JIP3, RHOE, PPP1R12A, PFN1, LIMK1, LIMK2 and TSG101. Interacts with FHOD1 in a Src-dependent manner. Interacts with SHROOM3. Mg(2+) serves as cofactor. Post-translationally, autophosphorylated on serine and threonine residues. Cleaved by caspase-3 during apoptosis. This leads to constitutive activation of the kinase and membrane blebbing. Detected in blood platelets.

Its subcellular location is the cytoplasm. The protein resides in the cytoskeleton. It localises to the microtubule organizing center. It is found in the centrosome. The protein localises to the centriole. Its subcellular location is the golgi apparatus membrane. The protein resides in the cell projection. It localises to the bleb. It is found in the cell membrane. The protein localises to the lamellipodium. Its subcellular location is the ruffle. The catalysed reaction is L-seryl-[protein] + ATP = O-phospho-L-seryl-[protein] + ADP + H(+). It catalyses the reaction L-threonyl-[protein] + ATP = O-phospho-L-threonyl-[protein] + ADP + H(+). With respect to regulation, activated by RHOA binding. Inhibited by Y-27632. Functionally, protein kinase which is a key regulator of the actin cytoskeleton and cell polarity. Involved in regulation of smooth muscle contraction, actin cytoskeleton organization, stress fiber and focal adhesion formation, neurite retraction, cell adhesion and motility via phosphorylation of DAPK3, GFAP, LIMK1, LIMK2, MYL9/MLC2, TPPP, PFN1 and PPP1R12A. Phosphorylates FHOD1 and acts synergistically with it to promote SRC-dependent non-apoptotic plasma membrane blebbing. Phosphorylates JIP3 and regulates the recruitment of JNK to JIP3 upon UVB-induced stress. Acts as a suppressor of inflammatory cell migration by regulating PTEN phosphorylation and stability. Acts as a negative regulator of VEGF-induced angiogenic endothelial cell activation. Required for centrosome positioning and centrosome-dependent exit from mitosis. Plays a role in terminal erythroid differentiation. Inhibits podocyte motility via regulation of actin cytoskeletal dynamics and phosphorylation of CFL1. Promotes keratinocyte terminal differentiation. Involved in osteoblast compaction through the fibronectin fibrillogenesis cell-mediated matrix assembly process, essential for osteoblast mineralization. May regulate closure of the eyelids and ventral body wall by inducing the assembly of actomyosin bundles. This chain is Rho-associated protein kinase 1 (ROCK1), found in Homo sapiens (Human).